The following is a 270-amino-acid chain: Shikimate dehydrogenase (NADP(+)) (270 aa).

Residues 14-16 (SKS) and T60 contribute to the shikimate site. Residue K64 is the Proton acceptor of the active site. Residue E76 participates in NADP(+) binding. 2 residues coordinate shikimate: N85 and D101. NADP(+)-binding positions include 125–129 (GAGGA), 149–154 (NRTASR), and M213. Y215 lines the shikimate pocket. An NADP(+)-binding site is contributed by G236.

This sequence belongs to the shikimate dehydrogenase family. Homodimer.

It carries out the reaction shikimate + NADP(+) = 3-dehydroshikimate + NADPH + H(+). The protein operates within metabolic intermediate biosynthesis; chorismate biosynthesis; chorismate from D-erythrose 4-phosphate and phosphoenolpyruvate: step 4/7. In terms of biological role, involved in the biosynthesis of the chorismate, which leads to the biosynthesis of aromatic amino acids. Catalyzes the reversible NADPH linked reduction of 3-dehydroshikimate (DHSA) to yield shikimate (SA). The polypeptide is Shikimate dehydrogenase (NADP(+)) (Stutzerimonas stutzeri (strain A1501) (Pseudomonas stutzeri)).